A 426-amino-acid chain; its full sequence is Glutamate-1-semialdehyde 2,1-aminomutase (426 aa).

Position 267 is an N6-(pyridoxal phosphate)lysine (lysine 267).

This sequence belongs to the class-III pyridoxal-phosphate-dependent aminotransferase family. HemL subfamily. As to quaternary structure, homodimer. Requires pyridoxal 5'-phosphate as cofactor.

It is found in the cytoplasm. It carries out the reaction (S)-4-amino-5-oxopentanoate = 5-aminolevulinate. Its pathway is porphyrin-containing compound metabolism; protoporphyrin-IX biosynthesis; 5-aminolevulinate from L-glutamyl-tRNA(Glu): step 2/2. This chain is Glutamate-1-semialdehyde 2,1-aminomutase, found in Bdellovibrio bacteriovorus (strain ATCC 15356 / DSM 50701 / NCIMB 9529 / HD100).